The sequence spans 358 residues: Psilocybin cluster transcription regulator (358 aa).

Disordered stretches follow at residues 1–40 and 62–212; these read MAPATPATHDPALSHGAPPAPGAPAPANAPPNASGDIAGM and SGGK…RRRR. Residues 18–29 are compositionally biased toward pro residues; the sequence is PPAPGAPAPANA. A compositionally biased stretch (polar residues) spans 79–91; sequence QTLSNLAQAQPYG. A compositionally biased stretch (low complexity) spans 179-190; that stretch reads PTTGRRGGRSAT. Over residues 195-209 the composition is skewed to basic and acidic residues; sequence EWSRQRKDNHKEVER. The interval 199–212 is basic motif; the sequence is QRKDNHKEVERRRR. Residues 199-249 form the bHLH domain; the sequence is QRKDNHKEVERRRRGNINEGINELGRIVPSGSGEKAKGAILSRAVQYIHHL. Residues 213-249 form a helix-loop-helix motif region; that stretch reads GNINEGINELGRIVPSGSGEKAKGAILSRAVQYIHHL. The stretch at 264–306 forms a coiled coil; that stretch reads KLLMDQAMGDLQAQLEEVKRLWEEERMARTRLEAELEVLRNMN. The interval 308-358 is disordered; sequence VNAGSAPASKDESAAGTKRRSTDGAEAATAATESSTANAEGERDGKRQRTE. Over residues 331 to 346 the composition is skewed to low complexity; that stretch reads GAEAATAATESSTANA. The span at 347 to 358 shows a compositional bias: basic and acidic residues; it reads EGERDGKRQRTE.

It is found in the nucleus. Its function is as follows. Transcription factor that may regulate the expression of the gene cluster that mediates the biosynthesis of psilocybin, a psychotropic tryptamine-derived natural product. The sequence is that of Psilocybin cluster transcription regulator from Psilocybe cubensis (Psychedelic mushroom).